Reading from the N-terminus, the 300-residue chain is MSPSMLTGNSPRGCRLPSISSTTCGRQLEKVPEKRDSGMTEVERTYSANCSDFLESKGCFANTTPSGKSVSSSSSVETGPSVSEPPGLPRVSAYVDTTADLDRKLSFSHSDHSSEMSLPEVQKDKYPEEFSLLKLQTKDGHRPEWTFYPRFSSNIHTYHVGKQCFFNGVFLGNKRSLSERTVDKCFGRKKYDIDPRNGIPKLTPGDNPYMYPEQSKGFHKAGSMLPPVNFSIVPYEKKFDTFIPLEPLPQIPNLPFWVKEKANSLKNEIQEVEELDNWQPAVPLMHMLHLSGALDFPRQS.

Positions 1–10 (MSPSMLTGNS) are enriched in polar residues. 2 disordered regions span residues 1–42 (MSPS…MTEV) and 64–91 (TPSG…LPRV). Residues 27–42 (QLEKVPEKRDSGMTEV) show a composition bias toward basic and acidic residues. The segment covering 64–85 (TPSGKSVSSSSSVETGPSVSEP) has biased composition (low complexity). At Ser-113 the chain carries Phosphoserine.

The sequence is that of Spermatogenesis-associated serine-rich protein 1 (SPATS1) from Homo sapiens (Human).